The sequence spans 343 residues: Undecaprenyl-diphosphatase 2 (343 aa).

A run of 4 helical transmembrane segments spans residues 21–41 (LFPV…GGSW), 57–77 (PYLT…LVFF), 104–124 (LAWL…ALEH), and 129–149 (LFAK…ILLA). Residues 179-193 (VPAPATVPTQTTSAP) are compositionally biased toward low complexity. Positions 179-202 (VPAPATVPTQTTSAPGGRATARHT) are disordered. 4 helical membrane passes run 225-245 (AGVI…RSGI), 265-285 (FLLA…ALAG), 294-314 (QVIL…RFLV), and 322-342 (LTPF…RFAI).

This sequence belongs to the UppP family.

It is found in the cell membrane. It carries out the reaction di-trans,octa-cis-undecaprenyl diphosphate + H2O = di-trans,octa-cis-undecaprenyl phosphate + phosphate + H(+). Its function is as follows. Catalyzes the dephosphorylation of undecaprenyl diphosphate (UPP). Confers resistance to bacitracin. In Frankia alni (strain DSM 45986 / CECT 9034 / ACN14a), this protein is Undecaprenyl-diphosphatase 2.